Reading from the N-terminus, the 698-residue chain is Cytoplasmic polyadenylation element-binding protein 3 (698 aa).

The segment covering 1–11 has biased composition (basic and acidic residues); the sequence is MQDDLLMDKSK. 2 disordered regions span residues 1–114 and 158–208; these read MQDD…WSTG and AQTQ…SAAA. Low complexity predominate over residues 13-28; the sequence is QPQPQQQQRQQQQPQP. Polar residues predominate over residues 29–44; it reads ESSVSEAPSTPLSSET. Residues 87–96 are compositionally biased toward pro residues; it reads PQQPPPPQEP. Positions 103-114 are enriched in polar residues; that stretch reads LSPSFGSTWSTG. The segment covering 165-185 has biased composition (pro residues); it reads QPPPPAPAPQPAQPAQPPQAQ. The segment covering 186–208 has biased composition (low complexity); sequence PPQQRRSPASPSQAPYAQRSAAA. Phosphoserine is present on residues S192, S195, and S290. R308 is subject to Asymmetric dimethylarginine. 2 consecutive RRM domains span residues 441-532 and 549-631; these read RKVF…PWNL and KTIF…PYVL.

This sequence belongs to the RRM CPEB family. Following synaptic activity, forms amyloid-like oligomers. Aggregation requires an intact actin cytoskeleton. Interacts with STAT5B; this inhibits STAT5B-mediated transcriptional activation. Interacts with E3 ubiquitin-protein ligase NEURL1; this leads to monoubiquitination and activation of CPEB3. Interacts with CAPN2; this leads to cleavage of CPEB3. Interacts (via C-terminal RNA-binding region) with TOB1; TOB1 also binds CNOT7/CAF1 and recruits it to CPEB3 to form a ternary complex. Interacts with SUMO-conjugating enzyme UBC9. Interacts with IPO5; the interaction is enhanced in a RAN-regulated manner following neuronal stimulation and mediates CPEB3 nuclear import. Interacts with exportin XPO1/CRM1. Post-translationally, activated by NEURL1-mediated monoubiquitination, resulting in the growth of new dendritic spines and increased levels of GRIA1 and GRIA2. NEURL1-mediated monoubiquitination facilitates synaptic plasticity and hippocampal-dependent memory storage. In terms of processing, under basal unstimulated conditions when CPEB3 is mainly unaggregated, sumoylated and acts as a translational repressor. Following neuronal stimulation, becomes desumoylated and aggregated which is required for the translation of mRNA targets and for dendritic filopodia formation. Following neuronal stimulation, cleaved by CAPN2 which abolishes its translational repressor activity, leading to translation of CPEB3 target mRNAs. Post-translationally, phosphorylation is enhanced by neuronal stimulation.

It is found in the cytoplasm. Its subcellular location is the nucleus. It localises to the synapse. The protein resides in the cell projection. The protein localises to the dendrite. It is found in the postsynaptic density. Functionally, sequence-specific RNA-binding protein which acts as a translational repressor in the basal unstimulated state but, following neuronal stimulation, acts as a translational activator. In contrast to CPEB1, does not bind to the cytoplasmic polyadenylation element (CPE), a uridine-rich sequence element within the mRNA 3'-UTR, but binds to a U-rich loop within a stem-loop structure. Required for the consolidation and maintenance of hippocampal-based long term memory. In the basal state, binds to the mRNA 3'-UTR of the glutamate receptors GRIA2/GLUR2 mRNA and negatively regulates their translation. Also represses the translation of DLG4, GRIN1, GRIN2A and GRIN2B. When activated, acts as a translational activator of GRIA1 and GRIA2. In the basal state, suppresses SUMO2 translation but activates it following neuronal stimulation. Binds to the 3'-UTR of TRPV1 mRNA and represses TRPV1 translation which is required to maintain normal thermoception. Binds actin mRNA, leading to actin translational repression in the basal state and to translational activation following neuronal stimulation. Negatively regulates target mRNA levels by binding to TOB1 which recruits CNOT7/CAF1 to a ternary complex and this leads to target mRNA deadenylation and decay. In addition to its role in translation, binds to and inhibits the transcriptional activation activity of STAT5B without affecting its dimerization or DNA-binding activity. This, in turn, represses transcription of the STAT5B target gene EGFR which has been shown to play a role in enhancing learning and memory performance. In contrast to CPEB1, CPEB2 and CPEB4, not required for cell cycle progression. The sequence is that of Cytoplasmic polyadenylation element-binding protein 3 (CPEB3) from Homo sapiens (Human).